An 868-amino-acid polypeptide reads, in one-letter code: DNA topoisomerase 1 (868 aa).

A Toprim domain is found at 3-147 (KSLVIVESPA…RYKRVVFNEI (145 aa)). Position 9 (glutamate 9) interacts with Mg(2+). The segment at 34–70 (IRDLPTSGSSSSKEPAAKGRKSASEAPALSPKEKARR) is disordered. Aspartate 116 contributes to the Mg(2+) binding site. Residues 163-580 (DINRVNAQQA…EFYGDFKKKL (418 aa)) enclose the Topo IA-type catalytic domain. Residues 197-202 (SAGRVQ) are interaction with DNA. Tyrosine 324 acts as the O-(5'-phospho-DNA)-tyrosine intermediate in catalysis. 3 consecutive C4-type zinc fingers follow at residues 602-633 (CRECGRPMMIRTASTGVFLGCSGYSLPPKERC), 664-691 (CPICSTAMDAYLLDEKHKLHICGNNPDC), and 713-738 (CDKCGSEMQLKTGRFGKFFGCTNPTC).

Belongs to the type IA topoisomerase family. As to quaternary structure, monomer. The cofactor is Mg(2+).

The enzyme catalyses ATP-independent breakage of single-stranded DNA, followed by passage and rejoining.. Functionally, releases the supercoiling and torsional tension of DNA, which is introduced during the DNA replication and transcription, by transiently cleaving and rejoining one strand of the DNA duplex. Introduces a single-strand break via transesterification at a target site in duplex DNA. The scissile phosphodiester is attacked by the catalytic tyrosine of the enzyme, resulting in the formation of a DNA-(5'-phosphotyrosyl)-enzyme intermediate and the expulsion of a 3'-OH DNA strand. The free DNA strand then undergoes passage around the unbroken strand, thus removing DNA supercoils. Finally, in the religation step, the DNA 3'-OH attacks the covalent intermediate to expel the active-site tyrosine and restore the DNA phosphodiester backbone. This is DNA topoisomerase 1 from Pseudomonas aeruginosa (strain ATCC 15692 / DSM 22644 / CIP 104116 / JCM 14847 / LMG 12228 / 1C / PRS 101 / PAO1).